Consider the following 468-residue polypeptide: Gasdermin-C (468 aa).

A triggers pyroptosis region spans residues 1–230 (MSYTFDWLSK…CVILTSANTK (230 aa)).

The protein belongs to the gasdermin family. As to quaternary structure, homooligomer; homooligomeric ring-shaped pore complex containing 27-28 subunits when inserted in the membrane. Post-translationally, cleavage by CASP8 relieves autoinhibition by releasing the N-terminal moiety (Gasdermin-C, N-terminal) that initiates pyroptosis. In terms of processing, palmitoylated.

The protein resides in the cytoplasm. The protein localises to the cytosol. Its subcellular location is the cell membrane. Its activity is regulated as follows. The full-length protein before cleavage is inactive: intramolecular interactions between N- and C-terminal domains mediate autoinhibition in the absence of activation signal. The intrinsic pyroptosis-inducing activity is carried by the released N-terminal moiety (Gasdermin-C, N-terminal) following cleavage by caspase CASP8. Its function is as follows. This form constitutes the precursor of the pore-forming protein: upon cleavage, the released N-terminal moiety (Gasdermin-C, N-terminal) binds to membranes and forms pores, triggering pyroptosis. In terms of biological role, pore-forming protein that causes membrane permeabilization and pyroptosis. Produced by the cleavage of gasdermin-C by caspase CASP8 in response to death signals. After cleavage, moves to the plasma membrane where it strongly binds to membrane inner leaflet lipids. Homooligomerizes within the membrane and forms pores of 10-15 nanometers (nm) of inner diameter, triggering pyroptosis. In Mus musculus (Mouse), this protein is Gasdermin-C.